The chain runs to 391 residues: Probable sugar efflux transporter (391 aa).

The next 12 membrane-spanning stretches (helical) occupy residues 16–36 (VFVF…PVAL), 51–71 (VGLM…PLML), 82–102 (LLFL…AWNF), 103–123 (WVLL…WSIT), 138–158 (QALG…LPLG), 171–191 (FGVI…LLPP), 210–230 (PLLM…FTTY), 247–267 (ITTL…FLFG), 277–297 (FIAF…VFKN), 300–320 (WVIF…TIAL), 338–358 (IFSG…SIVI), and 361–381 (LGLG…LFWL).

Belongs to the major facilitator superfamily. SotB (TC 2.A.1.2) family.

Its subcellular location is the cell inner membrane. Involved in the efflux of sugars. The physiological role may be the reduction of the intracellular concentration of toxic sugars or sugar metabolites. This is Probable sugar efflux transporter from Helicobacter pylori (strain G27).